The primary structure comprises 246 residues: DNA polymerase sliding clamp (246 aa).

It belongs to the PCNA family. Homotrimer. The subunits circularize to form a toroid; DNA passes through its center. Replication factor C (RFC) is required to load the toroid on the DNA.

Sliding clamp subunit that acts as a moving platform for DNA processing. Responsible for tethering the catalytic subunit of DNA polymerase and other proteins to DNA during high-speed replication. The chain is DNA polymerase sliding clamp from Methanocella arvoryzae (strain DSM 22066 / NBRC 105507 / MRE50).